The chain runs to 312 residues: Zinc import ATP-binding protein ZnuC (312 aa).

An ABC transporter domain is found at 13–228 (VSLEDVGVLR…PEYVRLFGSR (216 aa)). An ATP-binding site is contributed by 45–52 (GPNGSGKS). A disordered region spans residues 241 to 312 (DHTHLPDGRV…HSRSGEGRHA (72 aa)). Over residues 243–312 (THLPDGRVLH…HSRSGEGRHA (70 aa)) the composition is skewed to basic and acidic residues.

The protein belongs to the ABC transporter superfamily. Zinc importer (TC 3.A.1.15.5) family. As to quaternary structure, the complex is composed of two ATP-binding proteins (ZnuC), two transmembrane proteins (ZnuB) and a solute-binding protein (ZnuA).

The protein resides in the cell inner membrane. The enzyme catalyses Zn(2+)(out) + ATP(in) + H2O(in) = Zn(2+)(in) + ADP(in) + phosphate(in) + H(+)(in). Its function is as follows. Part of the ABC transporter complex ZnuABC involved in zinc import. Responsible for energy coupling to the transport system. In Rhizobium etli (strain ATCC 51251 / DSM 11541 / JCM 21823 / NBRC 15573 / CFN 42), this protein is Zinc import ATP-binding protein ZnuC.